The chain runs to 1145 residues: DNA polymerase II large subunit (1145 aa).

The tract at residues 284 to 303 (KSSSESDEDEETDGKPKIKP) is disordered.

It belongs to the archaeal DNA polymerase II family. As to quaternary structure, heterodimer of a large subunit and a small subunit.

The enzyme catalyses DNA(n) + a 2'-deoxyribonucleoside 5'-triphosphate = DNA(n+1) + diphosphate. It carries out the reaction Exonucleolytic cleavage in the 3'- to 5'-direction to yield nucleoside 5'-phosphates.. Possesses two activities: a DNA synthesis (polymerase) and an exonucleolytic activity that degrades single-stranded DNA in the 3'- to 5'-direction. Has a template-primer preference which is characteristic of a replicative DNA polymerase. In Methanococcoides burtonii (strain DSM 6242 / NBRC 107633 / OCM 468 / ACE-M), this protein is DNA polymerase II large subunit.